Consider the following 143-residue polypeptide: Small ribosomal subunit protein uS11c (143 aa).

Belongs to the universal ribosomal protein uS11 family. As to quaternary structure, part of the 30S ribosomal subunit.

Its subcellular location is the plastid. It localises to the chloroplast. This Cenchrus americanus (Pearl millet) protein is Small ribosomal subunit protein uS11c.